The following is a 317-amino-acid chain: Transcription factor EC (317 aa).

The interval 1–44 is disordered; that stretch reads MTLDHQILNQSFKRSHPPTPSSELLVQHGHPSPESDTGLTGNPL. The tract at residues 1 to 90 is necessary for transcriptional transactivation; it reads MTLDHQILNQ…GLTSASCPSS (90 aa). Residues 34-43 are compositionally biased toward polar residues; sequence ESDTGLTGNP. One can recognise a bHLH domain in the interval 110–163; that stretch reads QKKDNHNLIERRRRYNINYRIKELGTLIPKSNDPDMRWNKGTILKASVEYIKWL. The tract at residues 241-317 is necessary for transcriptional transactivation; it reads TSPELCDQAM…SFSSEDGDEL (77 aa). Positions 297 to 317 are disordered; the sequence is PAVSKESSRRSSFSSEDGDEL.

The protein belongs to the MiT/TFE family. As to quaternary structure, homodimer. Forms heterodimers with MITF and TFE3. Interacts with MITF.

Its subcellular location is the nucleus. Functionally, transcriptional regulator that acts as a repressor or an activator. Acts as a transcriptional repressor on minimal promoter containing element F (that includes an E-box sequence). Binds to element F in an E-box sequence-specific manner. Acts as a transcriptional transactivator on the proximal promoter region of the tartrate-resistant acid phosphatase (TRAP) E-box containing promoter. Collaborates with MITF in target gene activation. Acts as a transcriptional repressor on minimal promoter containing mu E3 enhancer sequence. Binds to mu E3 DNA sequence of the immunoglobulin heavy-chain gene enhancer. Binds DNA in a homo- or heterodimeric form. The protein is Transcription factor EC (TFEC) of Bos taurus (Bovine).